The chain runs to 367 residues: Histone RNA hairpin-binding protein (367 aa).

Positions M1–S12 are enriched in polar residues. Disordered regions lie at residues M1–K24 and E49–E200. Residues L57–R73 show a composition bias toward basic and acidic residues. The segment covering S147–A156 has biased composition (polar residues). Low complexity predominate over residues S183–P192. Residues C206–C275 form an RNA-binding region. The segment at M342–H367 is disordered. Residues L347–S356 are compositionally biased toward polar residues.

It belongs to the SLBP family. Ubiquitinated by the CBC(fem-1) (Cul2-ElonginB-ElonginC) E3 ubiquitin-protein ligase complex, leading to its degradation.

Involved in histone pre-mRNA 3' processing. Required for chromosome condensation, progression of cell death and morphogenesis. The sequence is that of Histone RNA hairpin-binding protein (cdl-1) from Caenorhabditis elegans.